A 377-amino-acid chain; its full sequence is Guanine nucleotide-binding protein subunit beta-2 (377 aa).

WD repeat units lie at residues 63 to 93 (GHTGKVYSLDWTPEKNRIVSASQDGRLIVWN), 105 to 135 (LPCAWVMTCAFSPSGQSVACGGLDSVCSIFN), 154 to 185 (GHKGYVSSCQYVPDEDTHVITSSGDQTCVLWD), 202 to 233 (GHTADVQSVSISSSNPRLFVSGSCDSTARLWD), 246 to 276 (GHEGDVNTVKFFPDGNRFGTGSDDGTCRLFD), 293 to 323 (GDIPHVTSMAFSISGRLLFVGYSNGDCYVWD), and 339 to 369 (SHEGRISCLGLSADGSALCTGSWDTNLKIWA).

It belongs to the WD repeat G protein beta family. In terms of assembly, g proteins are composed of 3 units, alpha, beta and gamma.

Guanine nucleotide-binding proteins (G proteins) are involved as a modulator or transducer in various transmembrane signaling systems. The beta and gamma chains are required for the GTPase activity, for replacement of GDP by GTP, and for G protein-effector interaction. This Nicotiana tabacum (Common tobacco) protein is Guanine nucleotide-binding protein subunit beta-2.